A 161-amino-acid polypeptide reads, in one-letter code: Large ribosomal subunit protein bL17 (161 aa).

Positions 126 to 161 (TAAKKAPKTRRSRKKATASVAEAPTAEAASEEKAAE) are disordered. Basic residues predominate over residues 130-141 (KAPKTRRSRKKA). The segment covering 142-153 (TASVAEAPTAEA) has biased composition (low complexity).

Belongs to the bacterial ribosomal protein bL17 family. Part of the 50S ribosomal subunit. Contacts protein L32.

The polypeptide is Large ribosomal subunit protein bL17 (Parabacteroides distasonis (strain ATCC 8503 / DSM 20701 / CIP 104284 / JCM 5825 / NCTC 11152)).